Reading from the N-terminus, the 497-residue chain is Probable polyamine oxidase 4 (497 aa).

Residues E58, R66, V247, and E435 each contribute to the FAD site. The Microbody targeting signal motif lies at 495–497 (SRM).

It belongs to the flavin monoamine oxidase family. It depends on FAD as a cofactor. In terms of tissue distribution, highly expressed in roots, flowers and greening cotelydons. Lower expression in other tissues.

The protein localises to the peroxisome. The catalysed reaction is spermine + O2 + H2O = 3-aminopropanal + spermidine + H2O2. It carries out the reaction spermidine + O2 + H2O = 3-aminopropanal + putrescine + H2O2. The protein operates within amine and polyamine degradation; spermine degradation. It functions in the pathway amine and polyamine degradation; spermidine degradation. In terms of biological role, flavoenzyme involved in polyamine back-conversion. Catalyzes the oxidation of the secondary amino group of polyamines, such as spermine and spermidine. Substrate preference is spermine &gt; spermidine. No activity detected when putrescine or N(1)-acetylspermine are used as substrates. Plays an important role in the regulation of polyamine intracellular concentration. The protein is Probable polyamine oxidase 4 (PAO4) of Arabidopsis thaliana (Mouse-ear cress).